Reading from the N-terminus, the 341-residue chain is L-threonine 3-dehydrogenase (341 aa).

Cysteine 38 contacts Zn(2+). Catalysis depends on charge relay system residues threonine 40 and histidine 43. Zn(2+) contacts are provided by histidine 63, glutamate 64, cysteine 93, cysteine 96, cysteine 99, and cysteine 107. NAD(+) contacts are provided by residues isoleucine 175, aspartate 195, arginine 200, 262-264 (LGI), and 286-287 (IY).

The protein belongs to the zinc-containing alcohol dehydrogenase family. In terms of assembly, homotetramer. Zn(2+) serves as cofactor.

Its subcellular location is the cytoplasm. The enzyme catalyses L-threonine + NAD(+) = (2S)-2-amino-3-oxobutanoate + NADH + H(+). The protein operates within amino-acid degradation; L-threonine degradation via oxydo-reductase pathway; glycine from L-threonine: step 1/2. Its function is as follows. Catalyzes the NAD(+)-dependent oxidation of L-threonine to 2-amino-3-ketobutyrate. The chain is L-threonine 3-dehydrogenase from Escherichia coli (strain K12 / MC4100 / BW2952).